A 320-amino-acid chain; its full sequence is MARAKIALIGAGMIGGTLAHIAAREELGDILLFDIAEGTPQGKALDIAEASAVFGKDVSLKGVNDYADIAGADVCIVTAGVPRKPGMSRDDLLGINLKVMKAVGEGIKAHAPNAFVICITNPLDAMVWALQQFSGLPKEKVIGMAGVLDSARFAFFLAEKTGVSVEDIHAWTLGGHGDDMVPMVRHSTVGGLPLPELVKQGWLSQEELDGIVKRTRGGGGEIVALLKTGSAFYAPAESAIAMATSYLKDKKRVLPCATFLTGQYGLDGLYVGVPVVIGAGGAEKVIEFETNDEEKAMFAKSVESVKGLMEACKAIDSALV.

Residues 10–15 (GAGMIG) and Asp34 each bind NAD(+). Arg83 and Arg89 together coordinate substrate. NAD(+) contacts are provided by residues Asn96 and 119–121 (ITN). Substrate contacts are provided by Asn121 and Arg152. His176 functions as the Proton acceptor in the catalytic mechanism.

The protein belongs to the LDH/MDH superfamily. MDH type 3 family.

It catalyses the reaction (S)-malate + NAD(+) = oxaloacetate + NADH + H(+). Functionally, catalyzes the reversible oxidation of malate to oxaloacetate. This is Malate dehydrogenase from Caulobacter sp. (strain K31).